The sequence spans 380 residues: Cytochrome b (380 aa).

4 helical membrane passes run 33-53, 77-98, 113-133, and 178-198; these read FGSL…FLAM, WLIR…FIHV, WNIG…GYVL, and FFAF…VHLL. The heme b site is built by histidine 83 and histidine 97. Residues histidine 182 and histidine 196 each coordinate heme b. A ubiquinone is bound at residue histidine 201. The next 4 helical transmembrane spans lie at 226–246, 288–308, 320–340, and 347–367; these read IKDL…VLFF, LGGV…PLLN, ITQV…XXXX, and XXXX…IFMP.

This sequence belongs to the cytochrome b family. The cytochrome bc1 complex contains 11 subunits: 3 respiratory subunits (MT-CYB, CYC1 and UQCRFS1), 2 core proteins (UQCRC1 and UQCRC2) and 6 low-molecular weight proteins (UQCRH/QCR6, UQCRB/QCR7, UQCRQ/QCR8, UQCR10/QCR9, UQCR11/QCR10 and a cleavage product of UQCRFS1). This cytochrome bc1 complex then forms a dimer. The cofactor is heme b.

It localises to the mitochondrion inner membrane. Its function is as follows. Component of the ubiquinol-cytochrome c reductase complex (complex III or cytochrome b-c1 complex) that is part of the mitochondrial respiratory chain. The b-c1 complex mediates electron transfer from ubiquinol to cytochrome c. Contributes to the generation of a proton gradient across the mitochondrial membrane that is then used for ATP synthesis. The protein is Cytochrome b (MT-CYB) of Rhipidomys leucodactylus (White-footed climbing mouse).